The sequence spans 221 residues: Sugar transporter SWEET1 (221 aa).

The next 7 helical transmembrane spans lie at 3–23 (AGGF…LGMF), 42–62 (VQFL…SYGA), 68–88 (ILIV…LAYL), 96–116 (VVLL…GYFW), 126–146 (LQLL…SPLA), 160–180 (LSYP…LYGF), and 186–206 (YIMV…WLFW). The 85-residue stretch at 10-94 (LIYGACVVFT…LAYLHYCPRK (85 aa)) folds into the MtN3/slv 1 domain. The region spanning 127–212 (QLLGLFCSVF…WLFWKYPQEQ (86 aa)) is the MtN3/slv 2 domain. The tract at residues 149–221 (AKVIQTKSTQ…QDRNYWFLQT (73 aa)) is mediates interaction with TRPV2.

Belongs to the SWEET sugar transporter family. Interacts with TRPV2; the interaction probably occurs intracellularly and depends on TRPV2 N-glycosylation.

It localises to the golgi apparatus membrane. Its subcellular location is the cell membrane. Functionally, mediates sugar transport across membranes. May stimulate V(D)J recombination by the activation of RAG1. The protein is Sugar transporter SWEET1 (SLC50A1) of Papio anubis (Olive baboon).